Consider the following 514-residue polypeptide: MSHNAPLVLMILDGWGYNENDRYNAIAKANTPQWDEWWQTCPHILLKASGLPVGLPDEQMGNSEVGHMHIGAGRVIQQDFTRINEAINNGKFAKNAVFHEVIDQLKKTEKSLHIMGLLSPGGVHSHEQHLFALLALCNQKKFRSVHLHLFLDGRDTPPQSALDSLKCLNEELVKHPVATINSICGRYYAMDRDKRWERVEPVYNLLTQGKSEHQFPDAETAIHFYYKNKISDEFVPPTLIGKEHSIQDGDAVLFFNFRADRARQLTSTFLDPLFKGFERKTLPKLSYFVSMTQYDKNLITTIAFPPVPLNNTLGEVLSSHGLSQLRIAETEKYAHVTFFFNGGCESVFTNEERIMVPSPQVATYDLQPEMSAPELTKTLIAAINSRDYHVIICNYANADMVGHTGNFEATVQAIECLDQCMHQVWQALKNNGGKLLITADHGNAEEMFSEATNQAHTAHTSEPVPFLYVGGGWHFTHAEGSLIDIAPSLLALLGITPPPEMTGRILLEKNHAHV.

Aspartate 13 and serine 63 together coordinate Mn(2+). The active-site Phosphoserine intermediate is serine 63. Substrate contacts are provided by residues histidine 124, 154–155 (RD), arginine 186, arginine 192, 258–261 (RADR), and lysine 332. 5 residues coordinate Mn(2+): aspartate 399, histidine 403, aspartate 440, histidine 441, and histidine 459.

Belongs to the BPG-independent phosphoglycerate mutase family. Monomer. It depends on Mn(2+) as a cofactor.

It carries out the reaction (2R)-2-phosphoglycerate = (2R)-3-phosphoglycerate. Its pathway is carbohydrate degradation; glycolysis; pyruvate from D-glyceraldehyde 3-phosphate: step 3/5. Catalyzes the interconversion of 2-phosphoglycerate and 3-phosphoglycerate. This is 2,3-bisphosphoglycerate-independent phosphoglycerate mutase from Legionella pneumophila (strain Corby).